Consider the following 79-residue polypeptide: uncharacterized protein (79 aa).

This is an uncharacterized protein from Rhizobium leguminosarum.